The following is a 157-amino-acid chain: 17.8 kDa class I heat shock protein (157 aa).

One can recognise a sHSP domain in the interval 43–157; the sequence is ETAAFVNTHI…PEVKAIDISG (115 aa).

This sequence belongs to the small heat shock protein (HSP20) family. Forms oligomeric structures.

The protein localises to the cytoplasm. This is 17.8 kDa class I heat shock protein from Daucus carota (Wild carrot).